The following is an 82-amino-acid chain: Large ribosomal subunit protein bL31B-2 (82 aa).

It belongs to the bacterial ribosomal protein bL31 family. Type B subfamily. Part of the 50S ribosomal subunit.

The chain is Large ribosomal subunit protein bL31B-2 from Streptomyces avermitilis (strain ATCC 31267 / DSM 46492 / JCM 5070 / NBRC 14893 / NCIMB 12804 / NRRL 8165 / MA-4680).